The chain runs to 255 residues: F-box/SPRY domain-containing protein 1 (255 aa).

The F-box domain maps to aspartate 3 to histidine 51. In terms of domain architecture, B30.2/SPRY spans leucine 61–leucine 253.

This sequence belongs to the FBXO45/Fsn family. In terms of assembly, component of an E3 ubiquitin ligase complex composed of hiw and Fsn. Interacts with Rae1, probably as part of the hiw-Fsn complex. Interacts (via B30.2/SPRY domain) with vas. Interacts with Cul1. Expressed in nurse cells and oocytes (at protein level). Expressed in the brain. Expressed in the neuromuscular junction (NMJ).

It is found in the cytoplasm. The protein localises to the nucleus. The protein resides in the synapse. Its subcellular location is the cell projection. It localises to the axon. It is found in the perikaryon. It participates in protein modification; protein ubiquitination. In terms of biological role, required in the presynaptic motoneuron to down-regulate the levels of wnd and restrain synaptic terminal growth at the neuromuscular junction (NMJ). Negatively regulates the localization of vas to the posterior pole of the oocyte. Involved in primordial germ cell formation. This Drosophila melanogaster (Fruit fly) protein is F-box/SPRY domain-containing protein 1 (Fsn).